Consider the following 517-residue polypeptide: UDP-N-acetylmuramoylalanine--D-glutamate ligase (517 aa).

ATP is bound at residue 143–149; the sequence is GTNGKTT.

The protein belongs to the MurCDEF family.

Its subcellular location is the cytoplasm. The catalysed reaction is UDP-N-acetyl-alpha-D-muramoyl-L-alanine + D-glutamate + ATP = UDP-N-acetyl-alpha-D-muramoyl-L-alanyl-D-glutamate + ADP + phosphate + H(+). Its pathway is cell wall biogenesis; peptidoglycan biosynthesis. Functionally, cell wall formation. Catalyzes the addition of glutamate to the nucleotide precursor UDP-N-acetylmuramoyl-L-alanine (UMA). The chain is UDP-N-acetylmuramoylalanine--D-glutamate ligase from Leifsonia xyli subsp. xyli (strain CTCB07).